A 68-amino-acid polypeptide reads, in one-letter code: Conotoxin Cal14.13a (68 aa).

Positions 1–21 (MKLCVVIVLLMLAMPFNGGEA) are cleaved as a signal peptide. Positions 22-38 (SRFFNQHARSQRSGMKT) are excised as a propeptide. Valine 66 bears the Valine amide mark.

Contains 2 disulfide bonds. As to expression, expressed by the venom duct.

The protein localises to the secreted. Functionally, probable neurotoxin with unknown target. Possibly targets ion channels. The protein is Conotoxin Cal14.13a of Californiconus californicus (California cone).